A 367-amino-acid polypeptide reads, in one-letter code: Phospho-N-acetylmuramoyl-pentapeptide-transferase (367 aa).

Transmembrane regions (helical) follow at residues 30–50 (AAAITALLITLVAGPGFIALL), 71–91 (LPTMGGLLIIISVEVSVLLWA), 94–114 (TDPHVWLIMLALLWMGVIGFI), 138–158 (ISLGLVVGIYTSMDPVFSVLM), 169–189 (LTIDYGIFYVPVVIFIITALS), 200–220 (GLAAGSSAIVIFGLGGFAYLA), 237–257 (GGEIAVVCMAATMACVGFLWF), 264–284 (IIMGDTGSLALGSTIAVTALL), 289–309 (LLLPVLGGLFFLETLSVSLQV), and 344–364 (KIVIRFWIVTILLFLTSLMTL).

This sequence belongs to the glycosyltransferase 4 family. MraY subfamily. Mg(2+) serves as cofactor.

It is found in the cell inner membrane. The enzyme catalyses UDP-N-acetyl-alpha-D-muramoyl-L-alanyl-gamma-D-glutamyl-meso-2,6-diaminopimeloyl-D-alanyl-D-alanine + di-trans,octa-cis-undecaprenyl phosphate = di-trans,octa-cis-undecaprenyl diphospho-N-acetyl-alpha-D-muramoyl-L-alanyl-D-glutamyl-meso-2,6-diaminopimeloyl-D-alanyl-D-alanine + UMP. Its pathway is cell wall biogenesis; peptidoglycan biosynthesis. Functionally, catalyzes the initial step of the lipid cycle reactions in the biosynthesis of the cell wall peptidoglycan: transfers peptidoglycan precursor phospho-MurNAc-pentapeptide from UDP-MurNAc-pentapeptide onto the lipid carrier undecaprenyl phosphate, yielding undecaprenyl-pyrophosphoryl-MurNAc-pentapeptide, known as lipid I. The protein is Phospho-N-acetylmuramoyl-pentapeptide-transferase of Chlorobium phaeovibrioides (strain DSM 265 / 1930) (Prosthecochloris vibrioformis (strain DSM 265)).